A 1236-amino-acid polypeptide reads, in one-letter code: ESX-4 secretion system protein EccC4 (1236 aa).

Helical transmembrane passes span 32-52 (LLPVVMSVATVGVMVTVFLPG) and 59-79 (PTFLAFPMMMLVSLVVTAVTG). FtsK domains are found at residues 407 to 607 (GTAV…SESR), 747 to 936 (RVPL…ADSE), and 1018 to 1201 (GQPV…DEGA). ATP-binding positions include 430–437 (GATGSGKS), 765–772 (GAPQTGKS), and 1035–1042 (GDNECGKT).

Part of the ESX-4 / type VII secretion system (T7SS), which is composed of cytosolic and membrane components.

The protein resides in the cell membrane. The chain is ESX-4 secretion system protein EccC4 (eccC4) from Mycobacterium tuberculosis (strain ATCC 25618 / H37Rv).